A 319-amino-acid chain; its full sequence is NADH-ubiquinone oxidoreductase chain 1 (319 aa).

Transmembrane regions (helical) follow at residues 3-23, 74-94, 106-126, 149-169, 175-195, 226-246, 254-274, and 294-314; these read LITL…AMAF, LFLL…IPLP, ILFI…SGWA, TLGL…LTTF, AVWL…STLA, LFFL…TILF, LTIN…FLWV, and FLPL…SMAG.

The protein belongs to the complex I subunit 1 family.

Its subcellular location is the mitochondrion inner membrane. The enzyme catalyses a ubiquinone + NADH + 5 H(+)(in) = a ubiquinol + NAD(+) + 4 H(+)(out). Functionally, core subunit of the mitochondrial membrane respiratory chain NADH dehydrogenase (Complex I) that is believed to belong to the minimal assembly required for catalysis. Complex I functions in the transfer of electrons from NADH to the respiratory chain. The immediate electron acceptor for the enzyme is believed to be ubiquinone. The chain is NADH-ubiquinone oxidoreductase chain 1 (MT-ND1) from Polypterus ornatipinnis (Ornate bichir).